The primary structure comprises 159 residues: 2-C-methyl-D-erythritol 2,4-cyclodiphosphate synthase (159 aa).

Asp10 and His12 together coordinate a divalent metal cation. Residues 10–12 (DVH) and 36–37 (HS) each bind 4-CDP-2-C-methyl-D-erythritol 2-phosphate. His44 serves as a coordination point for a divalent metal cation. 4-CDP-2-C-methyl-D-erythritol 2-phosphate-binding positions include 58–60 (DIG), 134–137 (TTTE), Phe141, and Arg144.

The protein belongs to the IspF family. In terms of assembly, homotrimer. A divalent metal cation is required as a cofactor.

The catalysed reaction is 4-CDP-2-C-methyl-D-erythritol 2-phosphate = 2-C-methyl-D-erythritol 2,4-cyclic diphosphate + CMP. It participates in isoprenoid biosynthesis; isopentenyl diphosphate biosynthesis via DXP pathway; isopentenyl diphosphate from 1-deoxy-D-xylulose 5-phosphate: step 4/6. Involved in the biosynthesis of isopentenyl diphosphate (IPP) and dimethylallyl diphosphate (DMAPP), two major building blocks of isoprenoid compounds. Catalyzes the conversion of 4-diphosphocytidyl-2-C-methyl-D-erythritol 2-phosphate (CDP-ME2P) to 2-C-methyl-D-erythritol 2,4-cyclodiphosphate (ME-CPP) with a corresponding release of cytidine 5-monophosphate (CMP). The chain is 2-C-methyl-D-erythritol 2,4-cyclodiphosphate synthase from Bacteroides fragilis (strain ATCC 25285 / DSM 2151 / CCUG 4856 / JCM 11019 / LMG 10263 / NCTC 9343 / Onslow / VPI 2553 / EN-2).